Consider the following 318-residue polypeptide: Biotin synthase (318 aa).

The Radical SAM core domain maps to 44-273; sequence LCGNKFDLCT…TVQIRLAGGR (230 aa). The [4Fe-4S] cluster site is built by cysteine 62, cysteine 66, and cysteine 69. Serine 106, cysteine 138, cysteine 198, and arginine 268 together coordinate [2Fe-2S] cluster.

This sequence belongs to the radical SAM superfamily. Biotin synthase family. Homodimer. [4Fe-4S] cluster is required as a cofactor. It depends on [2Fe-2S] cluster as a cofactor.

It carries out the reaction (4R,5S)-dethiobiotin + (sulfur carrier)-SH + 2 reduced [2Fe-2S]-[ferredoxin] + 2 S-adenosyl-L-methionine = (sulfur carrier)-H + biotin + 2 5'-deoxyadenosine + 2 L-methionine + 2 oxidized [2Fe-2S]-[ferredoxin]. It functions in the pathway cofactor biosynthesis; biotin biosynthesis; biotin from 7,8-diaminononanoate: step 2/2. Functionally, catalyzes the conversion of dethiobiotin (DTB) to biotin by the insertion of a sulfur atom into dethiobiotin via a radical-based mechanism. This chain is Biotin synthase, found in Clostridium botulinum (strain Hall / ATCC 3502 / NCTC 13319 / Type A).